The sequence spans 691 residues: tRNA-dihydrouridine(47) synthase [NAD(P)(+)]-like (691 aa).

S2 carries the N-acetylserine modification. Residues 55 to 94 (PPPPSRSVKQNDAADVRAPQSGLVQEKKSKRQLKRERREQ) form a disordered region. 2 C3H1-type zinc fingers span residues 94–125 (QSTI…HDIE) and 138–163 (QCPF…HRDI). Positions 259–286 (LETEEVRPMKKAKSEDQKNSKTGDVGGV) are disordered. A compositionally biased stretch (basic and acidic residues) spans 262 to 279 (EEVRPMKKAKSEDQKNSK). FMN contacts are provided by residues 344–346 (PLT) and Q398. C429 serves as the catalytic Proton donor. FMN-binding positions include K468, H498, 531–533 (NGD), and 556–557 (AR).

It belongs to the Dus family. Dus3 subfamily. FMN serves as cofactor.

The enzyme catalyses 5,6-dihydrouridine(47) in tRNA + NAD(+) = uridine(47) in tRNA + NADH + H(+). It catalyses the reaction 5,6-dihydrouridine(47) in tRNA + NADP(+) = uridine(47) in tRNA + NADPH + H(+). The catalysed reaction is a 5,6-dihydrouridine in mRNA + NAD(+) = a uridine in mRNA + NADH + H(+). It carries out the reaction a 5,6-dihydrouridine in mRNA + NADP(+) = a uridine in mRNA + NADPH + H(+). Catalyzes the synthesis of dihydrouridine, a modified base found in the D-loop of most tRNAs. Specifically modifies U47 in cytoplasmic tRNAs. Catalyzes the synthesis of dihydrouridine in some mRNAs, thereby affecting their translation. In Arabidopsis thaliana (Mouse-ear cress), this protein is tRNA-dihydrouridine(47) synthase [NAD(P)(+)]-like.